A 189-amino-acid polypeptide reads, in one-letter code: MKNLFLIIGAPGSGKTTDASLIAQHDEKFAHFSTGDLLRAEVASGSELGKLIDGFISKGNLVPLDVVVNAIVSAIKSSNKSNIIIDGYPRSVEQMTELDKVLSEQDEISLKGVIEVDVSEDVARARVLGRARGADDNNEVFNNRMKVYLDPIKPIRKFYSEKELLHVVNGERGIDEIVADIKNLLAKLI.

12–17 (GSGKTT) provides a ligand contact to ATP. Residues 33 to 62 (STGDLLRAEVASGSELGKLIDGFISKGNLV) are NMP. AMP contacts are provided by residues threonine 34, arginine 39, 60–62 (NLV), 87–90 (GYPR), and glutamine 94. Positions 129–135 (GRARGAD) are LID. Arginine 130 serves as a coordination point for ATP. Positions 132 and 144 each coordinate AMP. Arginine 172 serves as a coordination point for ATP.

Belongs to the adenylate kinase family. As to quaternary structure, monomer.

The protein localises to the cytoplasm. It catalyses the reaction AMP + ATP = 2 ADP. It participates in purine metabolism; AMP biosynthesis via salvage pathway; AMP from ADP: step 1/1. Functionally, catalyzes the reversible transfer of the terminal phosphate group between ATP and AMP. Plays an important role in cellular energy homeostasis and in adenine nucleotide metabolism. The protein is Adenylate kinase of Campylobacter concisus (strain 13826).